Reading from the N-terminus, the 455-residue chain is tRNA modification GTPase MnmE (455 aa).

Arg22 contacts (6S)-5-formyl-5,6,7,8-tetrahydrofolate. Residues 43-67 (RRATRAALRSPPSGPGPTGPGPEEG) are disordered. (6S)-5-formyl-5,6,7,8-tetrahydrofolate is bound by residues Glu92 and Arg132. A TrmE-type G domain is found at 228 to 381 (GLQVAVVGAP…LEAALESRAR (154 aa)). Residue Asn238 coordinates K(+). Residues 238–243 (NVGKSS), 257–263 (SDIAGTT), and 282–285 (DTAG) each bind GTP. Ser242 is a binding site for Mg(2+). Ser257, Ile259, and Thr262 together coordinate K(+). Thr263 serves as a coordination point for Mg(2+). Residue Lys455 participates in (6S)-5-formyl-5,6,7,8-tetrahydrofolate binding.

This sequence belongs to the TRAFAC class TrmE-Era-EngA-EngB-Septin-like GTPase superfamily. TrmE GTPase family. Homodimer. Heterotetramer of two MnmE and two MnmG subunits. K(+) serves as cofactor.

Its subcellular location is the cytoplasm. Functionally, exhibits a very high intrinsic GTPase hydrolysis rate. Involved in the addition of a carboxymethylaminomethyl (cmnm) group at the wobble position (U34) of certain tRNAs, forming tRNA-cmnm(5)s(2)U34. This Rhodospirillum rubrum (strain ATCC 11170 / ATH 1.1.1 / DSM 467 / LMG 4362 / NCIMB 8255 / S1) protein is tRNA modification GTPase MnmE.